The chain runs to 683 residues: Outer dynein arm-docking complex subunit 4 (683 aa).

TPR repeat units follow at residues 13–46 (FPSY…QSGD), 47–80 (KNCL…DPTF), 48–80 (NCLV…DPTF), and 81–114 (CKGI…RPDR). The interval 158–179 (QQKPHPVRQLIHHPKRESKRKG) is disordered. The segment covering 167–179 (LIHHPKRESKRKG) has biased composition (basic residues). 5 TPR repeats span residues 275–311 (LKSL…NKEE), 320–353 (GNLY…AKEY), 360–393 (SRAL…AKTT), 397–430 (TWLF…AEEE), and 437–470 (LNAS…AKLV). Disordered stretches follow at residues 510–537 (ENAT…PEKV) and 553–683 (VLSK…EPIE). Basic and acidic residues-rich tracts occupy residues 521 to 537 (TAKE…PEKV), 566 to 590 (PEQR…ERGP), 602 to 620 (GRTE…RPSE), and 629 to 675 (SSPR…IEKD). One copy of the TPR 15 repeat lies at 592–625 (DTAKGQFGEAGRTEQNREETREIYRRPSELDQNL).

In terms of assembly, component of the outer dynein arm-docking complex along with ODAD1, ODAD2 and ODAD3. Interacts with ODAD1; this interaction may facilitate the recruitment and/or attachment of outer dynein arm docking complex proteins, including ODAD1, ODAD3 and ODAD2, to ciliary axonemes. Interacts with components of the IFT complex A, including IFT140, TTC21B/IFT139 and WDR19/IFT144, and the IFT complex B, including IFT46, IFT52 and IFT57. Interacts with CFAP53. As to expression, expressed in trachea multiciliated cells.

It is found in the cytoplasm. The protein resides in the cytoskeleton. Its subcellular location is the cilium axoneme. Functionally, component of the outer dynein arm-docking complex (ODA-DC) that mediates outer dynein arms (ODA) binding onto the doublet microtubule. Plays an essential role for the assembly of ODA-DC and for the docking of ODA in ciliary axoneme. In Bos taurus (Bovine), this protein is Outer dynein arm-docking complex subunit 4.